Consider the following 128-residue polypeptide: Ribosome-binding factor A (128 aa).

The protein belongs to the RbfA family. In terms of assembly, monomer. Binds 30S ribosomal subunits, but not 50S ribosomal subunits or 70S ribosomes.

It is found in the cytoplasm. One of several proteins that assist in the late maturation steps of the functional core of the 30S ribosomal subunit. Associates with free 30S ribosomal subunits (but not with 30S subunits that are part of 70S ribosomes or polysomes). Required for efficient processing of 16S rRNA. May interact with the 5'-terminal helix region of 16S rRNA. This chain is Ribosome-binding factor A, found in Microcystis aeruginosa (strain NIES-843 / IAM M-2473).